A 378-amino-acid polypeptide reads, in one-letter code: tRNA (guanine(26)-N(2))-dimethyltransferase (378 aa).

The Trm1 methyltransferase domain maps to 4-374 (KEVTEGKVRI…KGYEEIIRCV (371 aa)). The S-adenosyl-L-methionine site is built by R44, R69, D87, D114, and A115. Zn(2+) is bound by residues C246, C249, C263, and C266.

It belongs to the class I-like SAM-binding methyltransferase superfamily. Trm1 family.

It carries out the reaction guanosine(26) in tRNA + 2 S-adenosyl-L-methionine = N(2)-dimethylguanosine(26) in tRNA + 2 S-adenosyl-L-homocysteine + 2 H(+). In terms of biological role, dimethylates a single guanine residue at position 26 of a number of tRNAs using S-adenosyl-L-methionine as donor of the methyl groups. The chain is tRNA (guanine(26)-N(2))-dimethyltransferase from Saccharolobus islandicus (strain L.S.2.15 / Lassen #1) (Sulfolobus islandicus).